The following is a 101-amino-acid chain: Small ribosomal subunit protein uS14 (101 aa).

The segment covering Met1–Glu11 has biased composition (basic and acidic residues). Residues Met1–Arg24 form a disordered region. The segment covering Arg12–Arg24 has biased composition (basic residues).

Belongs to the universal ribosomal protein uS14 family. As to quaternary structure, part of the 30S ribosomal subunit. Contacts proteins S3 and S10.

Its function is as follows. Binds 16S rRNA, required for the assembly of 30S particles and may also be responsible for determining the conformation of the 16S rRNA at the A site. The protein is Small ribosomal subunit protein uS14 of Azorhizobium caulinodans (strain ATCC 43989 / DSM 5975 / JCM 20966 / LMG 6465 / NBRC 14845 / NCIMB 13405 / ORS 571).